A 537-amino-acid polypeptide reads, in one-letter code: Arginine--tRNA ligase (537 aa).

The 'HIGH' region signature appears at 113 to 123 (ANPTGRIHLGH).

The protein belongs to the class-I aminoacyl-tRNA synthetase family. Monomer.

The protein resides in the cytoplasm. It catalyses the reaction tRNA(Arg) + L-arginine + ATP = L-arginyl-tRNA(Arg) + AMP + diphosphate. The sequence is that of Arginine--tRNA ligase (argS) from Mycoplasma genitalium (strain ATCC 33530 / DSM 19775 / NCTC 10195 / G37) (Mycoplasmoides genitalium).